We begin with the raw amino-acid sequence, 361 residues long: 3-dehydroquinate synthase (361 aa).

NAD(+) is bound by residues 71–76 (DGEQFK), 105–109 (GVIGD), 129–130 (TT), Lys142, Lys151, and 169–172 (CLQT). Positions 184, 247, and 264 each coordinate Zn(2+).

The protein belongs to the sugar phosphate cyclases superfamily. Dehydroquinate synthase family. It depends on Co(2+) as a cofactor. Requires Zn(2+) as cofactor. The cofactor is NAD(+).

It is found in the cytoplasm. The enzyme catalyses 7-phospho-2-dehydro-3-deoxy-D-arabino-heptonate = 3-dehydroquinate + phosphate. It participates in metabolic intermediate biosynthesis; chorismate biosynthesis; chorismate from D-erythrose 4-phosphate and phosphoenolpyruvate: step 2/7. Catalyzes the conversion of 3-deoxy-D-arabino-heptulosonate 7-phosphate (DAHP) to dehydroquinate (DHQ). This Edwardsiella ictaluri (strain 93-146) protein is 3-dehydroquinate synthase.